The primary structure comprises 476 residues: Proton-coupled amino acid transporter 1 (476 aa).

Residues 1-15 (MSTQRLRNEDYHDYS) are compositionally biased toward basic and acidic residues. Positions 1–32 (MSTQRLRNEDYHDYSSTDVSPEESPSEGLNNL) are disordered. Topologically, residues 1–51 (MSTQRLRNEDYHDYSSTDVSPEESPSEGLNNLSSPGSYQRFGQSNSTTWFQ) are cytoplasmic. Residues 52–72 (TLIHLLKGNIGTGLLGLPLAV) traverse the membrane as a helical segment. Residues 73 to 78 (KNAGIV) lie on the Extracellular side of the membrane. A helical transmembrane segment spans residues 79 to 99 (MGPISLLIIGIVAVHCMGILV). Over 100-141 (KCAHHFCRRLNKSFVDYGDTVMYGLESSPCSWLRNHAHWGRR) the chain is Cytoplasmic. The helical transmembrane segment at 142–162 (VVDFFLIVTQLGFCCVYFVFL) threads the bilayer. Over 163 to 190 (ADNFKQVIEAANGTTNNCHNNETVILTP) the chain is Extracellular. Residues asparagine 174 and asparagine 183 are each glycosylated (N-linked (GlcNAc...) asparagine). Cysteines 180 and 329 form a disulfide. Residues 191–211 (TMDSRLYMLSFLPFLVLLVFI) traverse the membrane as a helical segment. The Cytoplasmic portion of the chain corresponds to 212–215 (RNLR). The chain crosses the membrane as a helical span at residues 216 to 236 (ALSIFSLLANITMLVSLVMIY). Residues 237-257 (QFIVQRIPDPSHLPLVAPWKT) are Extracellular-facing. A helical transmembrane segment spans residues 258–278 (YPLFFGTAIFSFEGIGMVLPL). Topologically, residues 279–289 (ENKMKDPRKFP) are cytoplasmic. The helical transmembrane segment at 290–310 (LILYLGMVIVTILYISLGCLG) threads the bilayer. The Extracellular portion of the chain corresponds to 311 to 342 (YLQFGANIQGSITLNLPNCWLYQSVKLLYSIG). A helical membrane pass occupies residues 343–363 (IFFTYALQFYVPAEIIIPFFV). Over 364-372 (SRAPEHCEL) the chain is Cytoplasmic. A helical transmembrane segment spans residues 373 to 393 (VVDLFVRTVLVCLTCILAILI). Residues 394 to 397 (PRLD) are Extracellular-facing. The helical transmembrane segment at 398–418 (LVISLVGSVSSSALALIIPPL) threads the bilayer. The Cytoplasmic portion of the chain corresponds to 419 to 439 (LEVTTFYSEGMSPLTIFKDAL). A helical transmembrane segment spans residues 440–460 (ISILGFVGFVVGTYEALYELI). Topologically, residues 461–476 (QPSNAPIFINSTCAFI) are extracellular. An N-linked (GlcNAc...) asparagine glycan is attached at asparagine 470.

Belongs to the amino acid/polyamine transporter 2 family.

It localises to the cell membrane. Its subcellular location is the apical cell membrane. It is found in the lysosome membrane. It catalyses the reaction glycine(in) + H(+)(in) = glycine(out) + H(+)(out). The catalysed reaction is L-alanine(in) + H(+)(in) = L-alanine(out) + H(+)(out). It carries out the reaction D-alanine(in) + H(+)(in) = D-alanine(out) + H(+)(out). The enzyme catalyses L-proline(out) + H(+)(out) = L-proline(in) + H(+)(in). It catalyses the reaction D-proline(out) + H(+)(out) = D-proline(in) + H(+)(in). The catalysed reaction is D-serine(out) + H(+)(out) = D-serine(in) + H(+)(in). It carries out the reaction L-serine(in) + H(+)(in) = L-serine(out) + H(+)(out). The enzyme catalyses 4-aminobutanoate(in) + H(+)(in) = 4-aminobutanoate(out) + H(+)(out). It catalyses the reaction beta-alanine(in) + H(+)(in) = beta-alanine(out) + H(+)(out). Its function is as follows. Electrogenic proton/amino acid symporter with selectivity for small apolar L-amino acids, their D-enantiomers and selected amino acid derivatives such as 4-aminobutanoate/GABA. May be involved in the efflux from the lysosomal compartment of neutral amino acids resulting from proteolysis. May play a role in specifying sites for exocytosis in neurons. The polypeptide is Proton-coupled amino acid transporter 1 (Homo sapiens (Human)).